We begin with the raw amino-acid sequence, 197 residues long: Holliday junction branch migration complex subunit RuvA (197 aa).

The interval 1–63 (MIALLNGQLI…EDALLLFGFL (63 aa)) is domain I. Positions 64 to 142 (TETEKDLFGL…PVQAVPGNAP (79 aa)) are domain II. A flexible linker region spans residues 142-146 (PLPAE). The domain III stretch occupies residues 147-197 (TAGDLREDALSALVNLGYKENLSRKALDGIDTAPDAPLEDILKQALKLLMR).

It belongs to the RuvA family. As to quaternary structure, homotetramer. Forms an RuvA(8)-RuvB(12)-Holliday junction (HJ) complex. HJ DNA is sandwiched between 2 RuvA tetramers; dsDNA enters through RuvA and exits via RuvB. An RuvB hexamer assembles on each DNA strand where it exits the tetramer. Each RuvB hexamer is contacted by two RuvA subunits (via domain III) on 2 adjacent RuvB subunits; this complex drives branch migration. In the full resolvosome a probable DNA-RuvA(4)-RuvB(12)-RuvC(2) complex forms which resolves the HJ.

Its subcellular location is the cytoplasm. Its function is as follows. The RuvA-RuvB-RuvC complex processes Holliday junction (HJ) DNA during genetic recombination and DNA repair, while the RuvA-RuvB complex plays an important role in the rescue of blocked DNA replication forks via replication fork reversal (RFR). RuvA specifically binds to HJ cruciform DNA, conferring on it an open structure. The RuvB hexamer acts as an ATP-dependent pump, pulling dsDNA into and through the RuvAB complex. HJ branch migration allows RuvC to scan DNA until it finds its consensus sequence, where it cleaves and resolves the cruciform DNA. The polypeptide is Holliday junction branch migration complex subunit RuvA (Syntrophotalea carbinolica (strain DSM 2380 / NBRC 103641 / GraBd1) (Pelobacter carbinolicus)).